A 164-amino-acid polypeptide reads, in one-letter code: SsrA-binding protein (164 aa).

The protein belongs to the SmpB family.

It is found in the cytoplasm. Its function is as follows. Required for rescue of stalled ribosomes mediated by trans-translation. Binds to transfer-messenger RNA (tmRNA), required for stable association of tmRNA with ribosomes. tmRNA and SmpB together mimic tRNA shape, replacing the anticodon stem-loop with SmpB. tmRNA is encoded by the ssrA gene; the 2 termini fold to resemble tRNA(Ala) and it encodes a 'tag peptide', a short internal open reading frame. During trans-translation Ala-aminoacylated tmRNA acts like a tRNA, entering the A-site of stalled ribosomes, displacing the stalled mRNA. The ribosome then switches to translate the ORF on the tmRNA; the nascent peptide is terminated with the 'tag peptide' encoded by the tmRNA and targeted for degradation. The ribosome is freed to recommence translation, which seems to be the essential function of trans-translation. In Synechococcus sp. (strain CC9311), this protein is SsrA-binding protein.